Consider the following 394-residue polypeptide: uncharacterized protein (394 aa).

11 helical membrane passes run 10–30 (PALI…NYYA), 50–70 (FIVT…VPLG), 79–99 (IVSM…SQSL), 100–120 (AMMI…QILV), 138–158 (TIMS…GLLA), 166–186 (VFWV…RGLP), 218–238 (LLGC…AFLL), 243–263 (FNYS…GALG), 291–311 (WLAI…ILVL), 337–357 (LTAG…LISA), and 364–384 (GWAG…LVWW).

This sequence belongs to the major facilitator superfamily.

The protein localises to the cell inner membrane. This is an uncharacterized protein from Escherichia coli O157:H7.